The following is a 43-amino-acid chain: Probable intron-encoded DNA endonuclease 2 (43 aa).

It belongs to the LAGLIDADG endonuclease family.

It is found in the mitochondrion. In terms of biological role, mitochondrial DNA endonuclease involved in intron homing. The protein is Probable intron-encoded DNA endonuclease 2 (hegI2) of Mycosarcoma maydis (Corn smut fungus).